Consider the following 343-residue polypeptide: Calcium/calmodulin-dependent protein kinase type 1B (343 aa).

Residues 15-270 form the Protein kinase domain; that stretch reads YEIREKLGSG…CQQALQHLWI (256 aa). ATP contacts are provided by residues 21–29 and K44; that span reads LGSGAFSEV. The active-site Proton acceptor is the D136. Positions 290–311 are calmodulin-binding; sequence KNFARTHWKRAFNATSFLRHIR. Residues 314 to 343 form a disordered region; the sequence is GQSPEGEEASRQGMTRHSHPGLGTSQSPKW. At S338 the chain carries Phosphoserine.

Belongs to the protein kinase superfamily. CAMK Ser/Thr protein kinase family. CaMK subfamily. In terms of processing, isoform 1 and isoform 2 are phosphorylated by CAMKK1. As to expression, isoform 1 is expressed in liver, heart, lung, kidney, spleen and testis. Isoform 2 is predominantly expressed in cerebrum and cerebellum.

Its subcellular location is the cytoplasm. The protein localises to the nucleus. The catalysed reaction is L-seryl-[protein] + ATP = O-phospho-L-seryl-[protein] + ADP + H(+). The enzyme catalyses L-threonyl-[protein] + ATP = O-phospho-L-threonyl-[protein] + ADP + H(+). Activated by Ca(2+)/calmodulin. Must be phosphorylated to be maximally active. Activated by CAMKK1. Calcium/calmodulin-dependent protein kinase belonging to a proposed calcium-triggered signaling cascade. In vitro, isoform 1 and isoform 2 phosphorylate CREB1, SYN1/synapsin I. Phosphorylates and activates CAMK1. The sequence is that of Calcium/calmodulin-dependent protein kinase type 1B (Pnck) from Rattus norvegicus (Rat).